The chain runs to 198 residues: Glycerol-3-phosphate acyltransferase (198 aa).

5 consecutive transmembrane segments (helical) span residues 2 to 22 (FITY…FALV), 53 to 75 (AGFI…PLIF), 79 to 98 (IHPL…PIFA), 113 to 133 (LLCY…TLLF), and 147 to 167 (IAAV…AMCL).

It belongs to the PlsY family. As to quaternary structure, probably interacts with PlsX.

It is found in the cell membrane. The enzyme catalyses an acyl phosphate + sn-glycerol 3-phosphate = a 1-acyl-sn-glycero-3-phosphate + phosphate. Its pathway is lipid metabolism; phospholipid metabolism. Its function is as follows. Catalyzes the transfer of an acyl group from acyl-phosphate (acyl-PO(4)) to glycerol-3-phosphate (G3P) to form lysophosphatidic acid (LPA). This enzyme utilizes acyl-phosphate as fatty acyl donor, but not acyl-CoA or acyl-ACP. The sequence is that of Glycerol-3-phosphate acyltransferase from Bacillus cytotoxicus (strain DSM 22905 / CIP 110041 / 391-98 / NVH 391-98).